A 243-amino-acid polypeptide reads, in one-letter code: tRNA pseudouridine synthase A (243 aa).

The active-site Nucleophile is the aspartate 54. A substrate-binding site is contributed by tyrosine 112.

Belongs to the tRNA pseudouridine synthase TruA family. As to quaternary structure, homodimer.

The catalysed reaction is uridine(38/39/40) in tRNA = pseudouridine(38/39/40) in tRNA. In terms of biological role, formation of pseudouridine at positions 38, 39 and 40 in the anticodon stem and loop of transfer RNAs. The chain is tRNA pseudouridine synthase A from Onion yellows phytoplasma (strain OY-M).